A 584-amino-acid chain; its full sequence is Proteasome-associated ATPase (584 aa).

Residues 16 to 91 are a coiled coil; sequence EELASQVRLL…KEEVDRLAQP (76 aa). 273 to 278 provides a ligand contact to ATP; sequence GCGKTL. The docks into pockets in the proteasome alpha-ring stretch occupies residues 583–584; it reads YL.

It belongs to the AAA ATPase family. Homohexamer. Assembles into a hexameric ring structure that caps the 20S proteasome core. Strongly interacts with the prokaryotic ubiquitin-like protein Pup through a hydrophobic interface; the interacting region of ARC lies in its N-terminal coiled-coil domain. There is one Pup binding site per ARC hexamer ring. Upon ATP-binding, the C-terminus of ARC interacts with the alpha-rings of the proteasome core, possibly by binding to the intersubunit pockets.

The protein operates within protein degradation; proteasomal Pup-dependent pathway. Its function is as follows. ATPase which is responsible for recognizing, binding, unfolding and translocation of pupylated proteins into the bacterial 20S proteasome core particle. May be essential for opening the gate of the 20S proteasome via an interaction with its C-terminus, thereby allowing substrate entry and access to the site of proteolysis. Thus, the C-termini of the proteasomal ATPase may function like a 'key in a lock' to induce gate opening and therefore regulate proteolysis. This is Proteasome-associated ATPase from Nocardioides sp. (strain ATCC BAA-499 / JS614).